Here is a 244-residue protein sequence, read N- to C-terminus: 3-deoxy-manno-octulosonate cytidylyltransferase (244 aa).

It belongs to the KdsB family.

It is found in the cytoplasm. It carries out the reaction 3-deoxy-alpha-D-manno-oct-2-ulosonate + CTP = CMP-3-deoxy-beta-D-manno-octulosonate + diphosphate. It participates in nucleotide-sugar biosynthesis; CMP-3-deoxy-D-manno-octulosonate biosynthesis; CMP-3-deoxy-D-manno-octulosonate from 3-deoxy-D-manno-octulosonate and CTP: step 1/1. The protein operates within bacterial outer membrane biogenesis; lipopolysaccharide biosynthesis. Its function is as follows. Activates KDO (a required 8-carbon sugar) for incorporation into bacterial lipopolysaccharide in Gram-negative bacteria. The protein is 3-deoxy-manno-octulosonate cytidylyltransferase of Ruthia magnifica subsp. Calyptogena magnifica.